A 357-amino-acid chain; its full sequence is Glycerol-1-phosphate dehydrogenase [NAD(P)+] (357 aa).

NAD(+) is bound by residues 104–108 (GKTID) and 126–129 (TAAS). Residue Asp131 coordinates substrate. An NAD(+)-binding site is contributed by Ser135. Substrate is bound at residue Asp178. 2 residues coordinate Zn(2+): Asp178 and His258. His262 lines the substrate pocket. Position 274 (His274) interacts with Zn(2+).

It belongs to the glycerol-1-phosphate dehydrogenase family. Zn(2+) serves as cofactor.

The protein localises to the cytoplasm. It carries out the reaction sn-glycerol 1-phosphate + NAD(+) = dihydroxyacetone phosphate + NADH + H(+). The catalysed reaction is sn-glycerol 1-phosphate + NADP(+) = dihydroxyacetone phosphate + NADPH + H(+). It functions in the pathway membrane lipid metabolism; glycerophospholipid metabolism. Catalyzes the NAD(P)H-dependent reduction of dihydroxyacetonephosphate (DHAP or glycerone phosphate) to glycerol 1-phosphate (G1P). The G1P thus generated is used as the glycerophosphate backbone of phospholipids in the cellular membranes of Archaea. The chain is Glycerol-1-phosphate dehydrogenase [NAD(P)+] from Methanococcoides burtonii (strain DSM 6242 / NBRC 107633 / OCM 468 / ACE-M).